A 511-amino-acid polypeptide reads, in one-letter code: ATP synthase subunit alpha, plastid (511 aa).

170 to 177 (GDRQTGKT) lines the ATP pocket.

Belongs to the ATPase alpha/beta chains family. F-type ATPases have 2 components, CF(1) - the catalytic core - and CF(0) - the membrane proton channel. CF(1) has five subunits: alpha(3), beta(3), gamma(1), delta(1), epsilon(1). CF(0) has four main subunits: a, b, b' and c.

The protein resides in the plastid membrane. The enzyme catalyses ATP + H2O + 4 H(+)(in) = ADP + phosphate + 5 H(+)(out). In terms of biological role, produces ATP from ADP in the presence of a proton gradient across the membrane. The alpha chain is a regulatory subunit. This Cuscuta reflexa (Southern Asian dodder) protein is ATP synthase subunit alpha, plastid.